We begin with the raw amino-acid sequence, 313 residues long: MRVPIAVVGPTATGKSELGLALAEHLDGEIVNIDAMQLYRGMDIGTAKLPVAERRGIPHHQLDVLDVTETASVATYQRNAAADVEAILARGRTPVIVGGSMMYVQALLDDWEFPATDPAVRAKWERLLATEGVAAVHAALRAADPAAAATILPTDGRRMVRALEVVELTGKPFAASAPRIGTPRWGTIILGVDRDTAELDERIARRTALMFDSGLVAEVRGLVERGLREGVTARRAIGYAHVLAYLDNEYDLEHAKERTLIGTRRYVRRQRSWFRRDPRVRWLDGADPGLVTTALALLGDAAAAPATTERTTQ.

9–16 (GPTATGKS) serves as a coordination point for ATP. Position 11–16 (11–16 (TATGKS)) interacts with substrate.

Belongs to the IPP transferase family. In terms of assembly, monomer. The cofactor is Mg(2+).

The enzyme catalyses adenosine(37) in tRNA + dimethylallyl diphosphate = N(6)-dimethylallyladenosine(37) in tRNA + diphosphate. Catalyzes the transfer of a dimethylallyl group onto the adenine at position 37 in tRNAs that read codons beginning with uridine, leading to the formation of N6-(dimethylallyl)adenosine (i(6)A). This is tRNA dimethylallyltransferase from Nocardia farcinica (strain IFM 10152).